A 351-amino-acid chain; its full sequence is 3-dehydroquinate synthase (351 aa).

Residues 126–127, Lys138, and Lys147 contribute to the NAD(+) site; that span reads TT. Residues Glu180, His244, and His260 each coordinate Zn(2+).

It belongs to the sugar phosphate cyclases superfamily. Dehydroquinate synthase family. It depends on Co(2+) as a cofactor. Zn(2+) serves as cofactor. The cofactor is NAD(+).

It localises to the cytoplasm. The enzyme catalyses 7-phospho-2-dehydro-3-deoxy-D-arabino-heptonate = 3-dehydroquinate + phosphate. It participates in metabolic intermediate biosynthesis; chorismate biosynthesis; chorismate from D-erythrose 4-phosphate and phosphoenolpyruvate: step 2/7. Its function is as follows. Catalyzes the conversion of 3-deoxy-D-arabino-heptulosonate 7-phosphate (DAHP) to dehydroquinate (DHQ). This Exiguobacterium sp. (strain ATCC BAA-1283 / AT1b) protein is 3-dehydroquinate synthase.